The chain runs to 351 residues: Translation initiation factor eIF2B subunit beta (351 aa).

The protein belongs to the eIF-2B alpha/beta/delta subunits family. Component of the translation initiation factor 2B (eIF2B) complex which is a heterodecamer of two sets of five different subunits: alpha, beta, gamma, delta and epsilon. Subunits alpha, beta and delta comprise a regulatory subcomplex and subunits epsilon and gamma comprise a catalytic subcomplex. Within the complex, the hexameric regulatory complex resides at the center, with the two heterodimeric catalytic subcomplexes bound on opposite sides.

It localises to the cytoplasm. Its subcellular location is the cytosol. Its activity is regulated as follows. Activated by the chemical integrated stress response (ISR) inhibitor ISRIB which stimulates guanine nucleotide exchange factor activity for both phosphorylated and unphosphorylated eIF2. In terms of biological role, acts as a component of the translation initiation factor 2B (eIF2B) complex, which catalyzes the exchange of GDP for GTP on eukaryotic initiation factor 2 (eIF2) gamma subunit. Its guanine nucleotide exchange factor activity is repressed when bound to eIF2 complex phosphorylated on the alpha subunit, thereby limiting the amount of methionyl-initiator methionine tRNA available to the ribosome and consequently global translation is repressed. This Homo sapiens (Human) protein is Translation initiation factor eIF2B subunit beta (EIF2B2).